Reading from the N-terminus, the 785-residue chain is Phosphoinositide phosphatase SAC5 (785 aa).

Residues 158–533 (LSVVDLSKNF…GNTLAMQYGG (376 aa)) form the SAC domain. A Phosphatase catalytic core motif is present at residues 469 to 480 (RTNCIDCLDRTN). Positions 688–700 (GSGQMFQGSSSNS) are enriched in polar residues. A disordered region spans residues 688 to 707 (GSGQMFQGSSSNSDSHRPND).

As to quaternary structure, component of the PI(3,5)P2 regulatory complex at least composed of ATG18, SAC/FIG4, FAB1 and VAC14. It depends on Mg(2+) as a cofactor. Ubiquitous with a higher level of expression in young seedlings than in other tissues.

It localises to the vacuole membrane. It carries out the reaction a 1,2-diacyl-sn-glycero-3-phospho-(1D-myo-inositol-3,5-bisphosphate) + H2O = a 1,2-diacyl-sn-glycero-3-phospho-(1D-myo-inositol-3-phosphate) + phosphate. Its function is as follows. The PI(3,5)P2 regulatory complex regulates both the synthesis and turnover of phosphatidylinositol 3,5-bisphosphate (PtdIns(3,5)P2). The chain is Phosphoinositide phosphatase SAC5 (SAC5) from Arabidopsis thaliana (Mouse-ear cress).